We begin with the raw amino-acid sequence, 969 residues long: Protein translocase subunit SecA (969 aa).

ATP is bound by residues Gln99, 117–121, and Asp631; that span reads GEGKT.

Belongs to the SecA family. As to quaternary structure, monomer and homodimer. Part of the essential Sec protein translocation apparatus which comprises SecA, SecYEG and auxiliary proteins SecDF. Other proteins may also be involved.

It is found in the cell inner membrane. The protein resides in the cytoplasm. It carries out the reaction ATP + H2O + cellular proteinSide 1 = ADP + phosphate + cellular proteinSide 2.. Its function is as follows. Part of the Sec protein translocase complex. Interacts with the SecYEG preprotein conducting channel. Has a central role in coupling the hydrolysis of ATP to the transfer of proteins into and across the cell membrane, serving as an ATP-driven molecular motor driving the stepwise translocation of polypeptide chains across the membrane. This chain is Protein translocase subunit SecA, found in Chlamydia trachomatis serovar A (strain ATCC VR-571B / DSM 19440 / HAR-13).